Consider the following 303-residue polypeptide: tRNA pseudouridine synthase B (303 aa).

The active-site Nucleophile is the aspartate 46.

It belongs to the pseudouridine synthase TruB family. Type 1 subfamily.

It catalyses the reaction uridine(55) in tRNA = pseudouridine(55) in tRNA. In terms of biological role, responsible for synthesis of pseudouridine from uracil-55 in the psi GC loop of transfer RNAs. The polypeptide is tRNA pseudouridine synthase B (Hydrogenovibrio crunogenus (strain DSM 25203 / XCL-2) (Thiomicrospira crunogena)).